We begin with the raw amino-acid sequence, 535 residues long: Peptide chain release factor 3 (535 aa).

Residues 8-277 (KRRRTFAIIS…TLVELAPPPG (270 aa)) enclose the tr-type G domain. GTP is bound by residues 17-24 (SHPDAGKT), 85-89 (DTPGH), and 139-142 (NKLD).

Belongs to the TRAFAC class translation factor GTPase superfamily. Classic translation factor GTPase family. PrfC subfamily.

Its subcellular location is the cytoplasm. Increases the formation of ribosomal termination complexes and stimulates activities of RF-1 and RF-2. It binds guanine nucleotides and has strong preference for UGA stop codons. It may interact directly with the ribosome. The stimulation of RF-1 and RF-2 is significantly reduced by GTP and GDP, but not by GMP. The chain is Peptide chain release factor 3 from Nitrosomonas europaea (strain ATCC 19718 / CIP 103999 / KCTC 2705 / NBRC 14298).